We begin with the raw amino-acid sequence, 84 residues long: U8-theraphotoxin-Hhn1c 3 (84 aa).

The signal sequence occupies residues 1–21; sequence MKVALIVCLVWVMAMMELVSC. Cystine bridges form between Cys-23/Cys-35, Cys-29/Cys-44, Cys-34/Cys-67, Cys-54/Cys-75, and Cys-69/Cys-81.

It belongs to the AVIT (prokineticin) family. As to expression, expressed by the venom gland.

The protein resides in the secreted. This is U8-theraphotoxin-Hhn1c 3 from Cyriopagopus hainanus (Chinese bird spider).